A 349-amino-acid chain; its full sequence is Cytoplasmic tRNA 2-thiolation protein 2 (349 aa).

The protein belongs to the CTU2/NCS2 family.

It is found in the cytoplasm. The protein operates within tRNA modification; 5-methoxycarbonylmethyl-2-thiouridine-tRNA biosynthesis. In terms of biological role, plays a central role in 2-thiolation of mcm(5)S(2)U at tRNA wobble positions of tRNA(Lys), tRNA(Glu) and tRNA(Gln). May act by forming a heterodimer with tut-1/ctu-1 that ligates sulfur from thiocarboxylated urm-1 onto the uridine of tRNAs at wobble position. In Caenorhabditis briggsae, this protein is Cytoplasmic tRNA 2-thiolation protein 2.